We begin with the raw amino-acid sequence, 353 residues long: MNILGIETSCDETSAAVLLDGRIGSNVISSQRCHTSFGGVVPELASREHERTIVSIVNSAVTEANITKNELDCIAATAGPGLIGAVMVGLCFAEGMAFALGIPFVPVNHIEAHMFSAFIPESPEHKSPEGPFISLTVSGGHTLLSLVREDLSYDVIGKTLDDAAGEAFDKTGKMLGLAYPAGPVIDRLAASGNPHFHAFPKALTSSSQTSRSYRGNFDFSFSGLKTSVLTWLQKHPAEFIQTHLHDIAASIQYAIVSVLTEKAVAAARYFRTDAISVAGGVSANSALRTAMQEACRHHGIRLYIPGTVYSTDNAAMIASLAGLMLSKGAVRKNNYDVAPFASFAAGAIKASLK.

Fe cation is bound by residues His109 and His113. Substrate-binding positions include 136 to 140 (TVSGG), Asp169, Gly182, Asp186, and Asn284. A Fe cation-binding site is contributed by Asp312.

The protein belongs to the KAE1 / TsaD family. It depends on Fe(2+) as a cofactor.

Its subcellular location is the cytoplasm. The enzyme catalyses L-threonylcarbamoyladenylate + adenosine(37) in tRNA = N(6)-L-threonylcarbamoyladenosine(37) in tRNA + AMP + H(+). Functionally, required for the formation of a threonylcarbamoyl group on adenosine at position 37 (t(6)A37) in tRNAs that read codons beginning with adenine. Is involved in the transfer of the threonylcarbamoyl moiety of threonylcarbamoyl-AMP (TC-AMP) to the N6 group of A37, together with TsaE and TsaB. TsaD likely plays a direct catalytic role in this reaction. In Chlorobium limicola (strain DSM 245 / NBRC 103803 / 6330), this protein is tRNA N6-adenosine threonylcarbamoyltransferase.